The primary structure comprises 916 residues: Protein prickle (916 aa).

2 disordered regions span residues 49-105 and 127-176; these read PLSP…AGGS and QHLQ…IPVD. Positions 145-156 are enriched in low complexity; that stretch reads SSPSPALSSSIT. Residues 157–171 are compositionally biased toward gly residues; that stretch reads TGGGGVTRGGGGGGH. In terms of domain architecture, PET spans 167–275; sequence GGGGHIIPVD…TVKQLATNQI (109 aa). 3 consecutive LIM zinc-binding domains span residues 274 to 338, 339 to 399, and 400 to 462; these read QICD…ETLK, PRCS…MFAE, and YCDF…GEPP. Disordered stretches follow at residues 460–593, 635–671, 692–725, and 763–870; these read EPPT…PNHR, VIPG…QPQS, DAIQ…ENLP, and RSKS…DTVY. Composition is skewed to polar residues over residues 507–517, 526–569, and 642–654; these read SPISERSTPHS, EMST…SRTL, and AKTN…SMPE. Residues 655-671 show a composition bias toward low complexity; sequence LSQSLQQQQQQQQQPQS. Residues 777 to 793 are compositionally biased toward basic residues; the sequence is RSSKSKRRSSHHHQHHR. Residues 796-805 are compositionally biased toward low complexity; it reads GESSSYSGTS. A compositionally biased stretch (basic and acidic residues) spans 829–844; it reads VPDVEFIEHQDHHRGD. Residues 852 to 867 show a composition bias toward low complexity; sequence RSVCSTCSSSSSSADD.

The protein belongs to the prickle / espinas / testin family. As to quaternary structure, interacts with dsh; PET and LIM domains interact with dsh DEP domain, in wing cells. Interacts with Vang in photoreceptor cells.

It localises to the cell membrane. In terms of biological role, acts in a planar cell polarity (PCP) complex; polarization along the apical/basal axis of epithelial cells. PCP signaling in the wing disk requires the receptor fz and the cytoplasmic proteins dsh and pk. These act in a feedback loop leading to activation of the jnk cascade and subsequent polarized arrangement of hairs and bristles. Dgo and pk compete with one another for dsh binding, thereby modulating fz dsh activity and ensuring tight control over fz PCP signaling. Vang, stan and pk function together to regulate the establishment of tissue polarity in the adult eye. The sequence is that of Protein prickle from Aedes aegypti (Yellowfever mosquito).